Here is a 371-residue protein sequence, read N- to C-terminus: Putative F-box protein At1g58090 (371 aa).

The 46-residue stretch at 1–46 (MVSKKLPLDLEEEILFRVPPRSLVRFRSVCREWNTLFKNKRFINKN) folds into the F-box domain.

The sequence is that of Putative F-box protein At1g58090 from Arabidopsis thaliana (Mouse-ear cress).